A 140-amino-acid polypeptide reads, in one-letter code: Small ribosomal subunit protein uS12m (140 aa).

The protein belongs to the universal ribosomal protein uS12 family.

The protein resides in the mitochondrion. The chain is Small ribosomal subunit protein uS12m (mrps12) from Dictyostelium citrinum (Slime mold).